The primary structure comprises 169 residues: MDPLKICENYLTFRSIIKGSTFSPGVFRRWRFHGLADVVGNIVEREEGRFWEIVPETHTLWAVFRGGFTVAPFTEILTSLQLENRGRQLAFLAFLSFLLRNWPSDSVVSEDARLDLVCAPAWSRIQIWSQAARLINDLPESVFEGQGSVVEEEQGEEHLARDSDDPFFD.

Residues 147 to 169 form a disordered region; that stretch reads GSVVEEEQGEEHLARDSDDPFFD. A compositionally biased stretch (basic and acidic residues) spans 156 to 169; it reads EEHLARDSDDPFFD.

Belongs to the adenoviridae E1B 19 kDa protein family.

The protein is E1B protein, small T-antigen of Canine adenovirus serotype 1 (strain Glaxo) (CAdV-1).